Here is a 451-residue protein sequence, read N- to C-terminus: Phosphoglucosamine mutase (451 aa).

Ser101 acts as the Phosphoserine intermediate in catalysis. Mg(2+)-binding residues include Ser101, Asp240, Asp242, and Asp244. A Phosphoserine modification is found at Ser101.

It belongs to the phosphohexose mutase family. The cofactor is Mg(2+). In terms of processing, activated by phosphorylation.

It catalyses the reaction alpha-D-glucosamine 1-phosphate = D-glucosamine 6-phosphate. Functionally, catalyzes the conversion of glucosamine-6-phosphate to glucosamine-1-phosphate. This Streptococcus pyogenes serotype M12 (strain MGAS2096) protein is Phosphoglucosamine mutase.